The sequence spans 132 residues: Protein FasE (132 aa).

This Escherichia coli protein is Protein FasE (fasE).